The sequence spans 143 residues: Small ribosomal subunit protein uS11c (143 aa).

Belongs to the universal ribosomal protein uS11 family. Part of the 30S ribosomal subunit.

The protein resides in the plastid. It is found in the chloroplast. This is Small ribosomal subunit protein uS11c from Zea mays (Maize).